We begin with the raw amino-acid sequence, 223 residues long: Urease accessory protein UreF (223 aa).

Belongs to the UreF family. UreD, UreF and UreG form a complex that acts as a GTP-hydrolysis-dependent molecular chaperone, activating the urease apoprotein by helping to assemble the nickel containing metallocenter of UreC. The UreE protein probably delivers the nickel.

It is found in the cytoplasm. Functionally, required for maturation of urease via the functional incorporation of the urease nickel metallocenter. This Agrobacterium fabrum (strain C58 / ATCC 33970) (Agrobacterium tumefaciens (strain C58)) protein is Urease accessory protein UreF.